The chain runs to 219 residues: Small ribosomal subunit protein uS5 (219 aa).

The S5 DRBM domain occupies 52-115 (LDDEVLDINM…DVAKLNLISV (64 aa)). The segment at 196-219 (LRNASQSRTPRRAAAKQREQEVSE) is disordered.

It belongs to the universal ribosomal protein uS5 family. Part of the 30S ribosomal subunit. Contacts protein S4.

Functionally, with S4 and S12 plays an important role in translational accuracy. This chain is Small ribosomal subunit protein uS5, found in Haloquadratum walsbyi (strain DSM 16790 / HBSQ001).